A 268-amino-acid polypeptide reads, in one-letter code: Putative hydro-lyase ABSDF2257 (268 aa).

This sequence belongs to the D-glutamate cyclase family.

In Acinetobacter baumannii (strain SDF), this protein is Putative hydro-lyase ABSDF2257.